The primary structure comprises 429 residues: MFS-type efflux pump MSMEG_3705 (429 aa).

12 consecutive transmembrane segments (helical) span residues 21-41 (AWAA…DRFL), 59-79 (AIGV…GIAV), 86-106 (GAFG…TMLG), 115-137 (LALT…HAYV), 150-170 (LAVI…GGGL), 181-201 (FVIM…VVGV), 228-248 (FLIV…LTTF), 264-284 (VGVE…LIVG), 299-319 (LWIV…AFVV), 327-347 (LFLA…IAAI), 361-381 (AMFL…VGML), and 397-417 (ALLL…WLAS).

Belongs to the major facilitator superfamily.

It is found in the cell inner membrane. Functionally, probably plays a role in bacterial growth and resistance to antibiotics. The protein is MFS-type efflux pump MSMEG_3705 of Mycolicibacterium smegmatis (strain ATCC 700084 / mc(2)155) (Mycobacterium smegmatis).